Consider the following 206-residue polypeptide: Protein SUE1, mitochondrial (206 aa).

Residues 1 to 24 (MILLKRTKIRGVSVSFVSLQRRTH) constitute a mitochondrion transit peptide.

It is found in the mitochondrion envelope. Functionally, required for degradation of unstable forms of cytochrome c. This Saccharomyces cerevisiae (strain ATCC 204508 / S288c) (Baker's yeast) protein is Protein SUE1, mitochondrial.